We begin with the raw amino-acid sequence, 495 residues long: Potassium voltage-gated channel subfamily A member 1 (495 aa).

The disordered stretch occupies residues 1–30 (MTVMSGENADEASTAPGHPQDGSYPRQADH). A tetramerization domain region spans residues 1-128 (MTVMSGENAD…FYELGEEAME (128 aa)). Residues 1-164 (MTVMSGENAD…LLFEYPESSG (164 aa)) are Cytoplasmic-facing. Residue serine 23 is modified to Phosphoserine. The chain crosses the membrane as a helical span at residues 165 to 186 (PARVIAIVSVMVILISIVIFCL). Residues 187-220 (ETLPELKDDKDFTGTIHRIDNTTVIYTSNIFTDP) lie on the Extracellular side of the membrane. N-linked (GlcNAc...) asparagine glycosylation occurs at asparagine 207. A helical membrane pass occupies residues 221–242 (FFIVETLCIIWFSFELVVRFFA). The S-palmitoyl cysteine moiety is linked to residue cysteine 243. The Cytoplasmic segment spans residues 243–253 (CPSKTDFFKNI). Residues 254 to 274 (MNFIDIVAIIPYFITLGTEIA) form a helical membrane-spanning segment. Residues 275–287 (EQEGNQKGEQATS) are Extracellular-facing. The chain crosses the membrane as a helical; Voltage-sensor span at residues 288 to 308 (LAILRVIRLVRVFRIFKLSRH). The Cytoplasmic segment spans residues 309–323 (SKGLQILGQTLKASM). Residues 310-323 (KGLQILGQTLKASM) form an S4-S5 linker region. Serine 322 bears the Phosphoserine; by PKA mark. Residues 324-345 (RELGLLIFFLFIGVILFSSAVY) form a helical membrane-spanning segment. Over 346–359 (FAEAEEAESHFSSI) the chain is Extracellular. Positions 360 to 371 (PDAFWWAVVSMT) form an intramembrane region, helical. Positions 372-377 (TVGYGD) match the Selectivity filter motif. An intramembrane segment occupies 372–379 (TVGYGDMY). At 380–386 (PVTIGGK) the chain is on the extracellular side. A helical membrane pass occupies residues 387 to 415 (IVGSLCAIAGVLTIALPVPVIVSNFNYFY). Residues 416–495 (HRETEGEEQA…VNKSKLLTDV (80 aa)) lie on the Cytoplasmic side of the membrane. Residues serine 437 and serine 439 each carry the phosphoserine modification. At serine 446 the chain carries Phosphoserine; by PKA. A PDZ-binding motif is present at residues 493–495 (TDV).

The protein belongs to the potassium channel family. A (Shaker) (TC 1.A.1.2) subfamily. Kv1.1/KCNA1 sub-subfamily. As to quaternary structure, homotetramer and heterotetramer with other channel-forming alpha subunits, such as KCNA2, KCNA4, KCNA5, KCNA6 and KCNA7. Channel activity is regulated by interaction with the beta subunits KCNAB1 and KCNAB2. Identified in a complex with KCNA2 and KCNAB2. Interacts (via C-terminus) with the PDZ domains of DLG1, DLG2 and DLG4. Interacts with LGI1 within a complex containing LGI1, KCNA4 and KCNAB1. Interacts (via N-terminus) with STX1A; this promotes channel inactivation. Interacts (via N-terminus) with the heterodimer formed by GNB1 and GNG2; this promotes channel inactivation. Can interact simultaneously with STX1A and the heterodimer formed by GNB1 and GNG2. Interacts (via cytoplasmic N-terminal domain) with KCNRG; this inhibits channel activity. Interacts with ANK3; this inhibits channel activity. Interacts with ADAM11. Post-translationally, N-glycosylated. Palmitoylated on Cys-243; which may be required for membrane targeting. In terms of processing, phosphorylated on tyrosine residues. Phosphorylation increases in response to NRG1; this inhibits channel activity. Phosphorylation at Ser-446 regulates channel activity by down-regulating expression at the cell membrane. Detected in brain. Expressed in cerebellar cortex basket cell terminals, the area surround the Purkinje cell soma, and the pinceaux expansions encircling the axon initial segment (at protein level). Detected in the juxtaparanodal regions of the nodes of Ranvier in myelinated axons. Detected in the paranodal region in sciatic nerve. Detected on cell bodies in cerebellum, dorsal and ventral cochlear nucleus, pontine reticular nucleus, mesencephalic trigeminal nucleus, motor trigeminal nucleus and the pricipal sensory trigeminal nucleus. Detected in terminal fields of basket cells in the cerebellum corpus medullare. Detected in hippocampus CA3 pyramidal neurons and in the hilus and stratum moleculare of the dentate gyrus. Detected in the central nucleus and the external nucleus of the inferior colliculus. Detected in fiber tracts in the optic tract, external medullary lamina, stria terminalis, medulla, ventral pallidum and substantia nigra. Detected in neurons from dorsal root ganglion. Detected in neurons in the medial nucleus of the trapezoid body. Detected in midbrain dopamine neuron axon terminals. Detected in brain cortex. Detected in brainstem. Detected in juxtaparanodal regions of the nodes of Ranvier in the vagus nerve, but only at very low levels in the heart. Detected in the islet of Langerhans. Detected at the luminal membrane in distal convoluted tubules in the kidney (at protein level). Detected in hippocampus, thalamus, neocortex and ventral brain cortex, including the piriform and entorhinal cortex and the amygdala. Detected in midbrain dopamine neurons. Detected in heart atrium, ventricle, sinoatrial node and atrioventricular node.

Its subcellular location is the cell membrane. It localises to the cell projection. It is found in the axon. The protein resides in the membrane. The protein localises to the perikaryon. Its subcellular location is the dendrite. It localises to the cell junction. It is found in the synapse. The protein resides in the cytoplasmic vesicle. The protein localises to the endoplasmic reticulum. Its subcellular location is the presynaptic cell membrane. It localises to the presynapse. The enzyme catalyses K(+)(in) = K(+)(out). Its activity is regulated as follows. Inhibited by 4-aminopyridine (4-AP), tetraethylammonium (TEA) and dendrotoxin (DTX), but not by charybdotoxin (CTX). In terms of biological role, voltage-gated potassium channel that mediates transmembrane potassium transport in excitable membranes, primarily in the brain and the central nervous system, but also in the kidney. Contributes to the regulation of the membrane potential and nerve signaling, and prevents neuronal hyperexcitability. Forms tetrameric potassium-selective channels through which potassium ions pass in accordance with their electrochemical gradient. The channel alternates between opened and closed conformations in response to the voltage difference across the membrane. Can form functional homotetrameric channels and heterotetrameric channels that contain variable proportions of KCNA1, KCNA2, KCNA4, KCNA5, KCNA6, KCNA7, and possibly other family members as well; channel properties depend on the type of alpha subunits that are part of the channel. Channel properties are modulated by cytoplasmic beta subunits that regulate the subcellular location of the alpha subunits and promote rapid inactivation of delayed rectifier potassium channels. In vivo, membranes probably contain a mixture of heteromeric potassium channel complexes, making it difficult to assign currents observed in intact tissues to any particular potassium channel family member. Homotetrameric KCNA1 forms a delayed-rectifier potassium channel that opens in response to membrane depolarization, followed by slow spontaneous channel closure. In contrast, a heterotetrameric channel formed by KCNA1 and KCNA4 shows rapid inactivation. Regulates neuronal excitability in hippocampus, especially in mossy fibers and medial perforant path axons, preventing neuronal hyperexcitability. May function as down-stream effector for G protein-coupled receptors and inhibit GABAergic inputs to basolateral amygdala neurons. May contribute to the regulation of neurotransmitter release, such as gamma-aminobutyric acid (GABA) release. Plays a role in regulating the generation of action potentials and preventing hyperexcitability in myelinated axons of the vagus nerve, and thereby contributes to the regulation of heart contraction. Required for normal neuromuscular responses. Regulates the frequency of neuronal action potential firing in response to mechanical stimuli, and plays a role in the perception of pain caused by mechanical stimuli, but does not play a role in the perception of pain due to heat stimuli. Required for normal responses to auditory stimuli and precise location of sound sources, but not for sound perception. The use of toxins that block specific channels suggest that it contributes to the regulation of the axonal release of the neurotransmitter dopamine. Required for normal postnatal brain development and normal proliferation of neuronal precursor cells in the brain. Plays a role in the reabsorption of Mg(2+) in the distal convoluted tubules in the kidney and in magnesium ion homeostasis, probably via its effect on the membrane potential. The protein is Potassium voltage-gated channel subfamily A member 1 of Mus musculus (Mouse).